Reading from the N-terminus, the 423-residue chain is Protein CLP1 homolog (423 aa).

Residues Glu16, Lys57, and 119–124 (DVGKST) each bind ATP.

It belongs to the Clp1 family. Clp1 subfamily.

The protein resides in the nucleus. Functionally, required for endonucleolytic cleavage during polyadenylation-dependent pre-mRNA 3'-end formation. This is Protein CLP1 homolog (cbc) from Drosophila yakuba (Fruit fly).